A 420-amino-acid polypeptide reads, in one-letter code: Gamma-glutamyl phosphate reductase (420 aa).

It belongs to the gamma-glutamyl phosphate reductase family.

It is found in the cytoplasm. The catalysed reaction is L-glutamate 5-semialdehyde + phosphate + NADP(+) = L-glutamyl 5-phosphate + NADPH + H(+). It functions in the pathway amino-acid biosynthesis; L-proline biosynthesis; L-glutamate 5-semialdehyde from L-glutamate: step 2/2. Functionally, catalyzes the NADPH-dependent reduction of L-glutamate 5-phosphate into L-glutamate 5-semialdehyde and phosphate. The product spontaneously undergoes cyclization to form 1-pyrroline-5-carboxylate. This Shewanella denitrificans (strain OS217 / ATCC BAA-1090 / DSM 15013) protein is Gamma-glutamyl phosphate reductase.